The chain runs to 237 residues: UDP-Gal:alpha-D-GlcNAc-diphosphoundecaprenol beta-1,4-galactosyltransferase (237 aa).

Residue Glu-101 is the Nucleophile of the active site.

Belongs to the glycosyltransferase 26 family. Requires Mn(2+) as cofactor. It depends on Ni(2+) as a cofactor. Pb(2+) is required as a cofactor.

It catalyses the reaction N-acetyl-alpha-D-glucosaminyl-di-trans,octa-cis-undecaprenyl diphosphate + UDP-alpha-D-galactose = beta-D-Gal-(1-&gt;4)-alpha-D-GlcNAc-di-trans,octa-cis-undecaprenyl diphosphate + UDP + H(+). It functions in the pathway bacterial outer membrane biogenesis; LPS O-antigen biosynthesis. Its function is as follows. Galactosyltransferase that adds one galactose residue in the beta-1-4 linkage to GlcNAc-alpha-pyrophosphate-lipid in the biosynthesis of the O-polysaccharide repeating unit of the O antigen. The sequence is that of UDP-Gal:alpha-D-GlcNAc-diphosphoundecaprenol beta-1,4-galactosyltransferase (wfeD) from Shigella boydii.